We begin with the raw amino-acid sequence, 59 residues long: Putative potassium channel toxin Ts25 (59 aa).

The first 22 residues, 1-22, serve as a signal peptide directing secretion; it reads MKAFYGILIIFILISMIHLSQQ. Intrachain disulfides connect Cys29–Cys50, Cys35–Cys55, and Cys39–Cys57.

Belongs to the short scorpion toxin superfamily. Potassium channel inhibitor family. Alpha-KTx 04 subfamily. In terms of tissue distribution, expressed by the venom gland.

It localises to the secreted. Its function is as follows. Potently blocks Kv1.1/KCNA1 (85%), Kv1.2/KCNA2 (91%), Kv1.3/KCNA3 (89%), Kv1.6/KCNA6 (94%), and Shaker (97%). This chain is Putative potassium channel toxin Ts25, found in Tityus serrulatus (Brazilian scorpion).